The following is a 150-amino-acid chain: D-aminoacyl-tRNA deacylase (150 aa).

The Gly-cisPro motif, important for rejection of L-amino acids signature appears at 136-137 (GP).

This sequence belongs to the DTD family. In terms of assembly, homodimer.

The protein resides in the cytoplasm. The enzyme catalyses glycyl-tRNA(Ala) + H2O = tRNA(Ala) + glycine + H(+). The catalysed reaction is a D-aminoacyl-tRNA + H2O = a tRNA + a D-alpha-amino acid + H(+). An aminoacyl-tRNA editing enzyme that deacylates mischarged D-aminoacyl-tRNAs. Also deacylates mischarged glycyl-tRNA(Ala), protecting cells against glycine mischarging by AlaRS. Acts via tRNA-based rather than protein-based catalysis; rejects L-amino acids rather than detecting D-amino acids in the active site. By recycling D-aminoacyl-tRNA to D-amino acids and free tRNA molecules, this enzyme counteracts the toxicity associated with the formation of D-aminoacyl-tRNA entities in vivo and helps enforce protein L-homochirality. The chain is D-aminoacyl-tRNA deacylase from Staphylococcus aureus (strain bovine RF122 / ET3-1).